Consider the following 110-residue polypeptide: UPF0122 protein GWCH70_1086 (110 aa).

It belongs to the UPF0122 family.

Functionally, might take part in the signal recognition particle (SRP) pathway. This is inferred from the conservation of its genetic proximity to ftsY/ffh. May be a regulatory protein. The sequence is that of UPF0122 protein GWCH70_1086 from Geobacillus sp. (strain WCH70).